Here is a 157-residue protein sequence, read N- to C-terminus: Peptide methionine sulfoxide reductase MsrA (157 aa).

Cysteine 10 is an active-site residue.

The protein belongs to the MsrA Met sulfoxide reductase family.

It catalyses the reaction L-methionyl-[protein] + [thioredoxin]-disulfide + H2O = L-methionyl-(S)-S-oxide-[protein] + [thioredoxin]-dithiol. The catalysed reaction is [thioredoxin]-disulfide + L-methionine + H2O = L-methionine (S)-S-oxide + [thioredoxin]-dithiol. Its function is as follows. Has an important function as a repair enzyme for proteins that have been inactivated by oxidation. Catalyzes the reversible oxidation-reduction of methionine sulfoxide in proteins to methionine. In Clostridium botulinum (strain Loch Maree / Type A3), this protein is Peptide methionine sulfoxide reductase MsrA.